We begin with the raw amino-acid sequence, 130 residues long: U-scoloptoxin(16)-Er4a (130 aa).

Residues 1 to 26 (MNTVSVVQFLAVGCAVFVLYGRGVFA) form the signal peptide.

This sequence belongs to the scoloptoxin-16 family. Post-translationally, contains 3 disulfide bonds. In terms of tissue distribution, expressed by the venom gland.

The protein resides in the secreted. This chain is U-scoloptoxin(16)-Er4a, found in Ethmostigmus rubripes (Giant centipede).